A 1862-amino-acid chain; its full sequence is Ankyrin-1 (1862 aa).

An 89 kDa domain region spans residues 1-827 (MGFCKADAAT…DELVGSKAER (827 aa)). ANK repeat units follow at residues 40-69 (NGLNGLHLASKEGHVKMVVELLHKEIILET), 73-102 (KGNTALHIAALAGQDEVVRELVNYGANVNA), 106-135 (KGFTPLYMAAQENHLEVVKFLLENGANQNV), 139-168 (DGFTPLAVALQQGHENVVAHLINYGTKGKV), 170-197 (LPALHIAARNDDTRTAAVLLQNDPNPDV), 201-230 (TGFTPLHIAAHYENLNVAQLLLNRGASVNF), 234-263 (NGITPLHIASRRGNVIMVRLLLDRGAQIET), 267-296 (DELTPLHCAARNGHVRISEILLDHGAPIQA), 300-329 (NGLSPIHMAAQGDHLDCVRLLLQYNAEIDD), 333-362 (DHLTPLHVAAHCGHHRVAKVLLDKGAKPNS), 366-395 (NGFTPLHIACKKNHIRVMELLLKTGASIDA), 399-428 (SGLTPLHVASFMGHLPIVKNLLQRGASPNV), 432-461 (KVETPLHMAARAGHTEVAKYLLQNKAKANA), 465-494 (DDQTPLHCAARIGHTGMVKLLLENGASPNL), 498-527 (AGHTPLHTAAREGHVDTALALLEKEASQAC), 531-560 (KGFTPLHVAAKYGKVRLAELLLEHDAHPNA), 564-593 (NGLTPLHVAVHHNNLDIVKLLLPRGGSPHS), 597-626 (NGYTPLHIAAKQNQIEVARSLLQYGGSANA), 630-659 (QGVTPLHLAAQEGHTEMVALLLSKQANGNL), 663-692 (SGLTPLHLVSQEGHVPVADVLIKHGVTVDA), 696-725 (MGYTPLHVASHYGNIKLVKFLLQHQADVNA), 729-758 (LGYSPLHQAAQQGHTDIVTLLLKNGASPNE), and 762-791 (NGTTPLAIAKRLGYISVTDVLKVVTDETSV). A Phosphoserine modification is found at lysine 55. Position 101 is a (3S)-3-hydroxyasparagine; by HIF1AN; partial (asparagine 101). The residue at position 229 (asparagine 229) is a (3S)-3-hydroxyasparagine; by HIF1AN. At serine 425 the chain carries Phosphoserine. (3S)-3-hydroxyasparagine; by HIF1AN is present on residues asparagine 427 and asparagine 460. A (3S)-3-hydroxyasparagine; by HIF1AN mark is found at asparagine 625 and asparagine 658. Aspartate 691 is modified ((3S)-3-hydroxyaspartate; by HIF1AN). Asparagine 724 carries the post-translational modification (3S)-3-hydroxyasparagine; by HIF1AN. Position 755 is a phosphoserine (serine 755). Asparagine 757 carries the (3S)-3-hydroxyasparagine; by HIF1AN modification. Phosphoserine occurs at positions 777, 813, 830, and 852. The disordered stretch occupies residues 812 to 834 (VSEDEGDELVGSKAERRDSRDVG). Residues 824 to 834 (KAERRDSRDVG) show a composition bias toward basic and acidic residues. Threonine 862 carries the post-translational modification Phosphothreonine. The interval 872 to 900 (DQEQASKEYDEDSLIPSSPATETSDNISP) is disordered. The span at 886–900 (IPSSPATETSDNISP) shows a compositional bias: polar residues. ZU5 domains follow at residues 909 to 1064 (FLVS…IMSR) and 1066 to 1212 (CQDY…LSDC). A Phosphothreonine modification is found at threonine 957. Residue tyrosine 1069 is modified to Phosphotyrosine. Position 1078 is a phosphoserine (serine 1078). The tract at residues 1197-1331 (ANFTTNVSAR…PVKVRDSSRE (135 aa)) is UPA domain. Phosphothreonine is present on residues threonine 1374 and threonine 1376. A phosphoserine mark is found at serine 1386 and serine 1388. Residues 1387-1862 (ESRLGFTSDT…KRASLKRGKQ (476 aa)) form a 55 kDa regulatory domain region. At threonine 1396 the chain carries Phosphothreonine. Positions 1399-1483 (VEMRMAVIRE…EIVNMLEGSG (85 aa)) constitute a Death domain. A phosphoserine mark is found at serine 1424, serine 1473, and serine 1482. The interval 1481-1506 (GSGRQSRNLKPERRHGDREYSLSPSQ) is disordered. Basic and acidic residues predominate over residues 1489 to 1500 (LKPERRHGDREY). Phosphoserine occurs at positions 1519, 1529, and 1612. Disordered regions lie at residues 1598–1720 (EGAH…GPHS) and 1744–1767 (VSTREHVQRGPPETGSPKAGKEPS). Basic and acidic residues predominate over residues 1637 to 1647 (EGQRSEKKRQE). Residues 1648-1666 (VSGTEQDTETEVSLVSGQQ) show a composition bias toward polar residues. Serine 1660, serine 1675, and serine 1685 each carry phosphoserine. Basic and acidic residues predominate over residues 1681–1694 (VLDRSQARTLDWDK). The segment covering 1695–1720 (QGSTAVHPQEATQSSWQEEVTQGPHS) has biased composition (polar residues).

As to quaternary structure, component of the ankyrin-1 complex in the erythrocyte, composed of ANK1, RHCE, RHAG, SLC4A1, EPB42, GYPA, GYPB and AQP1. Interacts with a number of integral membrane proteins and cytoskeletal proteins. Interacts (via N-terminus) with SPTB/spectrin (beta chain). Also interacts with TTN/titin. Isoform Mu17 interacts with OBSCN isoform 3/obscurin. Interacts with HIF1AN. Interacts (via ANK 1-5 repeats) with RHCE; this interaction mediates the primary membrane attachment site for ANK1. Interacts (via ANK 1-2 repeats) with AQP1 (via the N-terminal). Interacts (via ANK 1-13 repeats) with EPB42. Interacts directly with SLC4A1 (via the cytoplasmic domain); this interaction is mediated by the SLC4A1 Band 3-II and Band 3-III dimers. Post-translationally, regulated by phosphorylation. Acylated by palmitic acid group(s). In terms of processing, hydroxylated by HIF1AN at several asparagine and 1 aspartate residue within ANK repeat region; hydroxylation seems to increase the conformational stability of this region and may also modulate protein-protein interactions mediated by the ANK repeat region.

The protein localises to the cytoplasm. Its subcellular location is the cytoskeleton. It is found in the membrane. The protein resides in the sarcoplasmic reticulum. In terms of biological role, component of the ankyrin-1 complex, a multiprotein complex involved in the stability and shape of the erythrocyte membrane. Attaches integral membrane proteins to cytoskeletal elements; binds to the erythrocyte membrane protein band 4.2, to Na-K ATPase, to the lymphocyte membrane protein GP85, and to the cytoskeletal proteins fodrin, tubulin, vimentin and desmin. Erythrocyte ankyrins also link spectrin (beta chain) to the cytoplasmic domain of the erythrocytes anion exchange protein; they retain most or all of these binding functions. This is Ankyrin-1 from Mus musculus (Mouse).